Here is a 147-residue protein sequence, read N- to C-terminus: Endoribonuclease YbeY (147 aa).

3 residues coordinate Zn(2+): H109, H113, and H119.

This sequence belongs to the endoribonuclease YbeY family. Zn(2+) is required as a cofactor.

Its subcellular location is the cytoplasm. Functionally, single strand-specific metallo-endoribonuclease involved in late-stage 70S ribosome quality control and in maturation of the 3' terminus of the 16S rRNA. This is Endoribonuclease YbeY from Magnetococcus marinus (strain ATCC BAA-1437 / JCM 17883 / MC-1).